The sequence spans 558 residues: Adenine deaminase (558 aa).

The protein belongs to the metallo-dependent hydrolases superfamily. Adenine deaminase family. Mn(2+) is required as a cofactor.

The enzyme catalyses adenine + H2O + H(+) = hypoxanthine + NH4(+). This chain is Adenine deaminase, found in Deinococcus deserti (strain DSM 17065 / CIP 109153 / LMG 22923 / VCD115).